The chain runs to 529 residues: Serine/threonine-protein kinase RIO2 (529 aa).

Residues 97 to 273 (VGNQIGIGKE…RDVTCVRTFF (177 aa)) enclose the Protein kinase domain. Lys-123 lines the ATP pocket. Asp-228 serves as the catalytic Proton acceptor. Disordered regions lie at residues 331–366 (RNRQ…KDHE) and 411–452 (EGYK…GHVA). A compositionally biased stretch (acidic residues) spans 337–346 (DLGEDEDDSD). Positions 411 to 428 (EGYKDIELPPEDFKRPAD) are enriched in basic and acidic residues. A compositionally biased stretch (acidic residues) spans 429-447 (SENDDENDEDEEEGEEEDA).

The protein belongs to the protein kinase superfamily. RIO-type Ser/Thr kinase family. It depends on Mg(2+) as a cofactor. Expressed in pharynx (metacorpus and posterior bulbus). Expression is restricted to adult stage.

It carries out the reaction L-seryl-[protein] + ATP = O-phospho-L-seryl-[protein] + ADP + H(+). The catalysed reaction is L-threonyl-[protein] + ATP = O-phospho-L-threonyl-[protein] + ADP + H(+). Required for larval development. The sequence is that of Serine/threonine-protein kinase RIO2 from Caenorhabditis elegans.